Reading from the N-terminus, the 279-residue chain is Lipid phosphate phosphatase epsilon 1, chloroplastic (279 aa).

A chloroplast-targeting transit peptide spans 1-88 (MAASSSLLLL…SFINNSSEIR (88 aa)). 5 helical membrane-spanning segments follow: residues 126–142 (LWAV…SVVL), 164–184 (SHAQ…MEWL), 185–205 (GTNG…SYFI), 219–239 (VVVG…MWNS), and 255–275 (VFLF…LNWF).

Belongs to the PA-phosphatase related phosphoesterase family. In terms of tissue distribution, expressed in root tips, root branch points, cotyledons and leaves.

Its subcellular location is the plastid. It is found in the chloroplast inner membrane. Inhibited by Mg(2+). Exhibits phosphatidate phosphatase (PAP) activity in vitro. May play a secondary role as PAP in plastids. The polypeptide is Lipid phosphate phosphatase epsilon 1, chloroplastic (LPPE1) (Arabidopsis thaliana (Mouse-ear cress)).